A 1789-amino-acid chain; its full sequence is Protein TIC 214 (1789 aa).

6 helical membrane passes run 19–39, 68–88, 91–111, 133–153, 176–196, and 227–247; these read IINS…FSIG, FIAG…HLAL, PHTI…WNNH, VFLN…SSML, VGWL…LVWI, and IFSI…PSPI.

The protein belongs to the TIC214 family. Part of the Tic complex.

It localises to the plastid. Its subcellular location is the chloroplast inner membrane. Functionally, involved in protein precursor import into chloroplasts. May be part of an intermediate translocation complex acting as a protein-conducting channel at the inner envelope. The polypeptide is Protein TIC 214 (Capsella bursa-pastoris (Shepherd's purse)).